A 246-amino-acid polypeptide reads, in one-letter code: MADS-box transcription factor 14 (246 aa).

Positions 1 to 61 constitute an MADS-box domain; that stretch reads MGRGKVQLKR…GKLYEYATDS (61 aa). In terms of domain architecture, K-box spans 88 to 178; it reads QGNWCHEYRK…QKELVEKQKV (91 aa). The segment at 180–199 is disordered; the sequence is KQQVQWDQTQPQTSSSSSSF.

May interact with the K-box of MADS1 and MADS6. Highly expressed in sterile lemmas, at intermediate levels in stamens, and weakly in lemmas, paleas and carpels.

The protein resides in the nucleus. Its function is as follows. Probable transcription factor. May be involved in the control of flowering time. This chain is MADS-box transcription factor 14 (MADS14), found in Oryza sativa subsp. japonica (Rice).